Reading from the N-terminus, the 645-residue chain is uncharacterized protein (645 aa).

An N-terminal signal peptide occupies residues 1–23 (MPSSHRLSATILIFLSLTYISSS). Disordered regions lie at residues 30–58 (ITDK…TTAS) and 92–129 (NSNA…AGIP). Positions 92–102 (NSNANPYFSTT) are enriched in polar residues. N107 is a glycosylation site (N-linked (GlcNAc...) asparagine). Residues 107–119 (NRSDSSQKARDPD) show a composition bias toward basic and acidic residues. In terms of domain architecture, PAN 1 spans 135-214 (CFRRYENSII…QTRDYFEPTD (80 aa)). 2 cysteine pairs are disulfide-bonded: C161/C187 and C165/C175. A disordered region spans residues 225–247 (ESSSSAPSSEDEDSPPSPPPSAP). PAN domains lie at 281-369 (CPRG…EKIC) and 378-465 (CPST…EVEC). 6 disulfides stabilise this stretch: C281-C369, C313-C341, C317-C329, C378-C465, C407-C436, and C411-C422. N-linked (GlcNAc...) asparagine glycosylation is present at N421. Residues 556 to 567 (AGELENNDHEQI) show a composition bias toward basic and acidic residues. The interval 556–582 (AGELENNDHEQIEDNNTDASEDPVPTK) is disordered. N-linked (GlcNAc...) asparagine glycosylation is present at N570.

This is an uncharacterized protein from Caenorhabditis elegans.